Consider the following 119-residue polypeptide: Large ribosomal subunit protein eL31z (119 aa).

It belongs to the eukaryotic ribosomal protein eL31 family.

The polypeptide is Large ribosomal subunit protein eL31z (RPL31A) (Arabidopsis thaliana (Mouse-ear cress)).